We begin with the raw amino-acid sequence, 340 residues long: COP9 signalosome complex subunit 5 (340 aa).

Residues 52-189 (VRISATALIK…IGAFRTYPAD (138 aa)) enclose the MPN domain. Zn(2+) contacts are provided by His135, His137, and Asp148. Positions 135–148 (HSHPGYGCWLSGID) match the JAMM motif motif.

It belongs to the peptidase M67A family. CSN5 subfamily. In terms of assembly, component of the COP9 signalosome (CSN) complex.

It is found in the cytoplasm. Its subcellular location is the nucleus. Its function is as follows. Catalytic Component of the COP9 signalosome (CSN) complex that acts as an regulator of the ubiquitin (Ubl) conjugation pathway by mediating the deneddylation of the cullin subunit of SCF-type E3 ubiquitin-protein ligase complexes. This is COP9 signalosome complex subunit 5 (RRI1) from Gibberella zeae (strain ATCC MYA-4620 / CBS 123657 / FGSC 9075 / NRRL 31084 / PH-1) (Wheat head blight fungus).